Here is a 90-residue protein sequence, read N- to C-terminus: Phosphocarrier protein NPr (90 aa).

Residues threonine 2–aspartate 90 form the HPr domain. Histidine 16 acts as the Pros-phosphohistidine intermediate in catalysis.

Belongs to the HPr family.

It localises to the cytoplasm. Functionally, component of the phosphoenolpyruvate-dependent nitrogen-metabolic phosphotransferase system (nitrogen-metabolic PTS), that seems to be involved in regulating nitrogen metabolism. The phosphoryl group from phosphoenolpyruvate (PEP) is transferred to the phosphoryl carrier protein NPr by enzyme I-Ntr. Phospho-NPr then transfers it to EIIA-Ntr. Could function in the transcriptional regulation of sigma-54 dependent operons in conjunction with the NPr (PtsO) and EIIA-Ntr (PtsN) proteins. The chain is Phosphocarrier protein NPr (ptsO) from Escherichia coli O157:H7.